The following is a 560-amino-acid chain: Eukaryotic translation initiation factor 3 subunit D-1 (560 aa).

Residues 98–166 (VQKPPHQRGR…RGPPPKMRES (69 aa)) are disordered. Residues 100 to 121 (KPPHQRGRFRNMRNSRSGRGRN) show a composition bias toward basic residues. The residue at position 128 (threonine 128) is a Phosphothreonine. A compositionally biased stretch (basic residues) spans 147-156 (GRGMGKKFGH). An RNA gate region spans residues 291-305 (EFDLLTVNESSVEPP).

It belongs to the eIF-3 subunit D family. As to quaternary structure, component of the eukaryotic translation initiation factor 3 (eIF-3) complex. The eIF-3 complex interacts with pix.

The protein localises to the cytoplasm. Its function is as follows. mRNA cap-binding component of the eukaryotic translation initiation factor 3 (eIF-3) complex, which is involved in protein synthesis of a specialized repertoire of mRNAs and, together with other initiation factors, stimulates binding of mRNA and methionyl-tRNAi to the 40S ribosome. The eIF-3 complex specifically targets and initiates translation of a subset of mRNAs involved in cell proliferation. In the eIF-3 complex, eif3d specifically recognizes and binds the 7-methylguanosine cap of a subset of mRNAs. The polypeptide is Eukaryotic translation initiation factor 3 subunit D-1 (Drosophila sechellia (Fruit fly)).